The primary structure comprises 60 residues: MNAVFIAALLILGTSTFDAMRLWNYCTHILCTNDSDCGQSDSCRCRPPRGDDYRYHCSRY.

Residues 1–19 (MNAVFIAALLILGTSTFDA) form the signal peptide. Positions 49-51 (RGD) match the Cell attachment site motif.

It belongs to the ixodegrin family. In terms of processing, contains 3 disulfide bonds. As to expression, expressed in salivary glands.

The protein localises to the secreted. Functionally, tick salivary platelet aggregation inhibitor that plays an important part in the anti-hemostatic strategy of ticks. Inhibits platelet aggregation induced by ADP, thrombin and thromboxane A2 (TXA2). Blocks platelet adhesion to soluble collagen (most probably through the binding to alpha-2/beta-1 integrin (ITGA2/ITGB1)) and binds to purified glycoprotein IIb/IIIa (ITGA2B/ITGB3) in a dose-dependent manner. In vivo, reduces thrombus weight effectively in a rat arteriovenous shunt model and inhibits thrombosis in a carrageenan-induced mouse tail thrombosis model. The polypeptide is Ixodegrin-like peptide (Ixodes scapularis (Black-legged tick)).